A 312-amino-acid polypeptide reads, in one-letter code: MEVSEFEALRQHLMSVAYRLTGTVADAEDIVQEAWLRWDSPDTVIADPRAWLTTVVSRLGLDKLRSAAHRRETYTGTWLPEPVVTGLDATDPLAAVVAAEDARFAAMVVLERLRPDQRVAFVLHDGFAVPFAEVAEVLGTSEAAARQLASRARKAVTAQPALISGDPDPAHNEVVGRLMAAMAAGDLDTVVSLLHPDVTFTGDSNGKAPTAVRAVRGSDKVVRFILGLVQRYGPGLFGANQLALVNGELGAYTAGLPGVDGYRAMAPRITAITVRDGKVCALWDIANPDKFTGSPLKERRAQPTGRGRHHRN.

The interval 6 to 65 is sigma-70 factor domain-2; that stretch reads FEALRQHLMSVAYRLTGTVADAEDIVQEAWLRWDSPDTVIADPRAWLTTVVSRLGLDKLR. The short motif at 29–32 is the Polymerase core binding element; sequence DIVQ. The sigma-70 factor domain-4 stretch occupies residues 107-155; that stretch reads MVVLERLRPDQRVAFVLHDGFAVPFAEVAEVLGTSEAAARQLASRARKA. A DNA-binding region (H-T-H motif) is located at residues 131-150; sequence FAEVAEVLGTSEAAARQLAS. The tract at residues 293–312 is disordered; sequence GSPLKERRAQPTGRGRHHRN.

It belongs to the sigma-70 factor family. ECF subfamily. As to quaternary structure, interacts transiently with the RNA polymerase catalytic core formed by RpoA, RpoB, RpoC and RpoZ (2 alpha, 1 beta, 1 beta' and 1 omega subunit) to form the RNA polymerase holoenzyme that can initiate transcription.

Functionally, sigma factors are initiation factors that promote the attachment of RNA polymerase to specific initiation sites and are then released. Extracytoplasmic function (ECF) sigma factors are held in an inactive form by an anti-sigma factor until released, although no anti-sigma factor is known for this protein. Regulates the promoter of SigI, may not be autoregulated. This chain is ECF RNA polymerase sigma factor SigJ (sigJ), found in Mycobacterium tuberculosis (strain ATCC 25618 / H37Rv).